The following is a 315-amino-acid chain: MSDSLRIIFAGTPDFAARHLDALLTSGHNVVGVFTQPDRPAGRGKKLMPSPVKVLAEEKGLPVFQPVSLRPQENQQLVADLHADVMVVVAYGLILPKAVLDMPRLGCINVHGSLLPRWRGAAPIQRSLWAGDAETGVTIMQMDVGLDTGDMLYKLACPITAEDTSGSLYNKLAELGPQGLITTLKQLADGTAAPEAQNEALVTHAEKLSKEEARIDWSLSAVQLERCIRAFNPWPMSWLEIDGQPVKVWQASVIEDATQSLPGTILAATKQGIQVATGKGILNLLSLQPAGKKAMSAQDLLNSRREWFIPGNHLA.

Ser-113–Pro-116 serves as a coordination point for (6S)-5,6,7,8-tetrahydrofolate.

Belongs to the Fmt family.

The catalysed reaction is L-methionyl-tRNA(fMet) + (6R)-10-formyltetrahydrofolate = N-formyl-L-methionyl-tRNA(fMet) + (6S)-5,6,7,8-tetrahydrofolate + H(+). Its function is as follows. Attaches a formyl group to the free amino group of methionyl-tRNA(fMet). The formyl group appears to play a dual role in the initiator identity of N-formylmethionyl-tRNA by promoting its recognition by IF2 and preventing the misappropriation of this tRNA by the elongation apparatus. This chain is Methionyl-tRNA formyltransferase, found in Salmonella gallinarum (strain 287/91 / NCTC 13346).